Consider the following 208-residue polypeptide: Attacin-A (208 aa).

A signal peptide spans 1–20 (MQSFKICFFISCLSVVLVKG). Residues 21–47 (QFGGTVSSNPNGGLDVNARLSKTIGDP) constitute a propeptide that is removed on maturation.

Hemolymph and fat body.

The protein localises to the secreted. In terms of biological role, hemolymph antibacterial protein against Gram-negative bacteria. This chain is Attacin-A, found in Glossina morsitans morsitans (Savannah tsetse fly).